We begin with the raw amino-acid sequence, 57 residues long: Granulin-1 (57 aa).

2 disulfides stabilise this stretch: C4-C16 and C10-C26.

This sequence belongs to the granulin family. Post-translationally, granulins are disulfide bridged. As to expression, ubiquitous.

The protein localises to the secreted. In terms of biological role, granulins have possible cytokine-like activity. They may play a role in inflammation, wound repair, and tissue remodeling. The sequence is that of Granulin-1 from Cyprinus carpio (Common carp).